Reading from the N-terminus, the 147-residue chain is Microsomal glutathione S-transferase 2 (147 aa).

The next 3 helical transmembrane spans lie at isoleucine 6 to valine 26, phenylalanine 59 to alanine 79, and serine 111 to leucine 131.

Belongs to the MAPEG family. Homotrimer. Liver, spleen, skeletal muscle, heart, adrenals, pancreas, prostate, testis, fetal liver, and fetal spleen. Very low expression in lung, brain, placenta and bone marrow. Abundantly expressed in human umbilical vein endothelial cells (at protein level).

The protein resides in the endoplasmic reticulum membrane. The protein localises to the microsome membrane. It catalyses the reaction RX + glutathione = an S-substituted glutathione + a halide anion + H(+). The catalysed reaction is 1-chloro-2,4-dinitrobenzene + glutathione = 2,4-dinitrophenyl-S-glutathione + chloride + H(+). The enzyme catalyses leukotriene C4 = leukotriene A4 + glutathione. It carries out the reaction (5S)-hydroperoxy-(6E,8Z,11Z,14Z)-eicosatetraenoate + 2 glutathione = (5S)-hydroxy-(6E,8Z,11Z,14Z)-eicosatetraenoate + glutathione disulfide + H2O. Each monomer can bind on GSH molecule but only one subunit is catalytically active. Its function is as follows. Catalyzes several different glutathione-dependent reactions. Catalyzes the glutathione-dependent reduction of lipid hydroperoxides, such as 5-HPETE. Has glutathione transferase activity, toward xenobiotic electrophiles, such as 1-chloro-2, 4-dinitrobenzene (CDNB). Also catalyzes the conjugation of leukotriene A4 with reduced glutathione to form leukotriene C4 (LTC4). Involved in oxidative DNA damage induced by ER stress and anticancer agents by activating LTC4 biosynthetic machinery in nonimmune cells. The sequence is that of Microsomal glutathione S-transferase 2 (MGST2) from Homo sapiens (Human).